A 490-amino-acid polypeptide reads, in one-letter code: 4-hydroxybutyryl-CoA dehydratase/vinylacetyl-CoA-Delta-isomerase (490 aa).

[4Fe-4S] cluster is bound by residues cysteine 99 and cysteine 103. FAD contacts are provided by residues 149 to 156 (MTDPKGDR) and 188 to 190 (HQT). Positions 292 and 299 each coordinate [4Fe-4S] cluster. FAD contacts are provided by residues histidine 325 and 386-390 (DIAGG).

Homotetramer. The cofactor is FAD. Requires [4Fe-4S] cluster as cofactor.

The catalysed reaction is 4-hydroxybutanoyl-CoA = (2E)-butenoyl-CoA + H2O. It catalyses the reaction vinylacetyl-CoA = (2E)-butenoyl-CoA. Catalyzes the reversible conversion of 4-hydroxybutyryl-CoA to crotonyl-CoA. The mechanism of the reaction seems to go through three steps: (1) the FAD-dependent oxidation of 4-hydroxybutyryl-CoA to 4-hydroxycrotonyl-CoA; (2) the hydroxyl group is substituted by a hydride derived from the now reduced FAD in an SN2' reaction leading to vinylacetyl-CoA; (3) isomerization to yield crotonyl-CoA. In Clostridium aminobutyricum, this protein is 4-hydroxybutyryl-CoA dehydratase/vinylacetyl-CoA-Delta-isomerase (abfD).